A 255-amino-acid chain; its full sequence is Putative glutamine amidotransferase YafJ (255 aa).

Cys-2 serves as the catalytic For GATase activity. Residues 2 to 251 enclose the Glutamine amidotransferase type-2 domain; it reads CELLGMSANV…PGEWRLFCLG (250 aa).

The polypeptide is Putative glutamine amidotransferase YafJ (yafJ) (Escherichia coli (strain K12)).